The chain runs to 331 residues: HPr kinase/phosphorylase (331 aa).

Catalysis depends on residues H153 and K174. 168–175 contributes to the ATP binding site; that stretch reads GKSGLGKS. S175 contacts Mg(2+). The active-site Proton acceptor; for phosphorylation activity. Proton donor; for dephosphorylation activity is the D192. An important for the catalytic mechanism of both phosphorylation and dephosphorylation region spans residues 217–226; sequence MEIRGLGVVD. Residue E218 coordinates Mg(2+). R259 is a catalytic residue. Residues 280–285 are important for the catalytic mechanism of dephosphorylation; the sequence is PIFPGK.

It belongs to the HPrK/P family. In terms of assembly, homohexamer. The cofactor is Mg(2+).

It catalyses the reaction [HPr protein]-L-serine + ATP = [HPr protein]-O-phospho-L-serine + ADP + H(+). It carries out the reaction [HPr protein]-O-phospho-L-serine + phosphate + H(+) = [HPr protein]-L-serine + diphosphate. Functionally, catalyzes the ATP- as well as the pyrophosphate-dependent phosphorylation of a specific serine residue in HPr, a phosphocarrier protein of the phosphoenolpyruvate-dependent sugar phosphotransferase system (PTS). HprK/P also catalyzes the pyrophosphate-producing, inorganic phosphate-dependent dephosphorylation (phosphorolysis) of seryl-phosphorylated HPr (P-Ser-HPr). This is HPr kinase/phosphorylase from Pelodictyon phaeoclathratiforme (strain DSM 5477 / BU-1).